The following is a 64-amino-acid chain: Large ribosomal subunit protein uL30 (64 aa).

The protein belongs to the universal ribosomal protein uL30 family. In terms of assembly, part of the 50S ribosomal subunit.

The protein is Large ribosomal subunit protein uL30 of Methylorubrum populi (strain ATCC BAA-705 / NCIMB 13946 / BJ001) (Methylobacterium populi).